A 21-amino-acid polypeptide reads, in one-letter code: ADPDPLQDFXVADLXDNAVXV.

The protein belongs to the germin family. In terms of assembly, homotetramer.

Its subcellular location is the secreted. The protein resides in the extracellular space. It localises to the apoplast. The protein localises to the cell wall. May subsume the role of germin at the low water potentials during embryogenesis. The chain is Pseudogermin from Triticum aestivum (Wheat).